A 160-amino-acid chain; its full sequence is Cytochrome c-type biogenesis protein CcmE (160 aa).

At 1 to 8 (MNPRRKKR) the chain is on the cytoplasmic side. Residues 9 to 29 (LGVVLAILFGLSATIGLIIYA) form a helical; Signal-anchor for type II membrane protein membrane-spanning segment. Residues 30–160 (LNQNMDLFYT…SQEQKQGSDQ (131 aa)) are Periplasmic-facing. Heme contacts are provided by His-128 and Tyr-132.

It belongs to the CcmE/CycJ family.

It is found in the cell inner membrane. Functionally, heme chaperone required for the biogenesis of c-type cytochromes. Transiently binds heme delivered by CcmC and transfers the heme to apo-cytochromes in a process facilitated by CcmF and CcmH. This Vibrio cholerae serotype O1 (strain ATCC 39541 / Classical Ogawa 395 / O395) protein is Cytochrome c-type biogenesis protein CcmE.